The primary structure comprises 458 residues: Alpha-2C adrenergic receptor (458 aa).

At 1–51 (MASPALAAALAAAAAEGPNGSDAGEWGSGGGANASGTDWGPPPGQYSAGAV) the chain is on the extracellular side. N-linked (GlcNAc...) asparagine glycans are attached at residues Asn-19 and Asn-33. Residues 52-76 (AGLAAVVGFLIVFTVVGNVLVVIAV) form a helical membrane-spanning segment. The Cytoplasmic segment spans residues 77–88 (LTSRALRAPQNL). The chain crosses the membrane as a helical span at residues 89–114 (FLVSLASADILVATLVMPFSLANELM). Residues 115 to 124 (AYWYFGQVWC) are Extracellular-facing. Cysteines 124 and 202 form a disulfide. A helical membrane pass occupies residues 125-147 (GVYLALDVLFCTSSIVHLCAISL). At 148–168 (DRYWSVTQAVEYNLKRTPRRV) the chain is on the cytoplasmic side. Residues 169–191 (KATIVAVWLISAVISFPPLVSFY) form a helical membrane-spanning segment. Topologically, residues 192-207 (RRPDGAAYPQCGLNDE) are extracellular. The chain crosses the membrane as a helical span at residues 208-231 (TWYILSSCIGSFFAPCLIMGLVYA). Residues 232 to 379 (RIYRVAKLRT…QAREKRFTFV (148 aa)) lie on the Cytoplasmic side of the membrane. Residues 245–343 (SEKRGPAGPD…SPGPGGRLSR (99 aa)) are disordered. Positions 291–303 (RRRRRGALRRGGR) are enriched in basic residues. A helical transmembrane segment spans residues 380–403 (LAVVMGVFVLCWFPFFFSYSLYGI). Residues 404–416 (CREACQLPEPLFK) are Extracellular-facing. A helical membrane pass occupies residues 417–437 (FFFWIGYCNSSLNPVIYTVFN). Residues 438-458 (QDFRRSFKHILFRRRRRGFRQ) lie on the Cytoplasmic side of the membrane.

Belongs to the G-protein coupled receptor 1 family. Adrenergic receptor subfamily. ADRA2C sub-subfamily.

It is found in the cell membrane. Functionally, alpha-2 adrenergic receptors mediate the catecholamine-induced inhibition of adenylate cyclase through the action of G proteins. The polypeptide is Alpha-2C adrenergic receptor (Adra2c) (Rattus norvegicus (Rat)).